A 500-amino-acid polypeptide reads, in one-letter code: Melanopsin (500 aa).

Over 1-65 (MSHHSSWRGH…TVDVPDHAHY (65 aa)) the chain is Extracellular. The N-linked (GlcNAc...) asparagine glycan is linked to N18. A helical membrane pass occupies residues 66–86 (IIGAVILIVGITGVIGNALVI). The Cytoplasmic segment spans residues 87 to 101 (YVFCRSRTLRTAGNM). A helical transmembrane segment spans residues 102-122 (FVVNLAVADFFMSLTQSPVFF). Topologically, residues 123–138 (AASLHRRWIFGERICE) are extracellular. C137 and C215 are oxidised to a cystine. The helical transmembrane segment at 139-159 (LYAFCGALFGICSMMTLTAIA) threads the bilayer. Over 160 to 182 (ADRCLAITQPLALVGNVSRRKAG) the chain is Cytoplasmic. The helical transmembrane segment at 183 to 203 (AVLAVVWLYSLGWSLPPFFGW) threads the bilayer. Residues 204-232 (SAYVPEGLQTSCSWDYMTFTPSVRAYTIL) are Extracellular-facing. A helical transmembrane segment spans residues 233 to 253 (LFIFVFFIPLGIIVSCYVGIF). The Cytoplasmic segment spans residues 254-286 (QAIRAMGKEIRELDCGETQKVYERMQNEWKMAK). Residues 287–307 (IALLVILLFVISWSPYSVVAL) form a helical membrane-spanning segment. Residues 308-322 (TATAGYSHLLTPYMN) lie on the Extracellular side of the membrane. Residues 323 to 343 (SVPAVIAKASAIHNPIIYAIT) form a helical membrane-spanning segment. K330 is subject to N6-(retinylidene)lysine. Over 344 to 500 (HPKYRAAIAR…DGKALLLGGN (157 aa)) the chain is Cytoplasmic. 3 disordered regions span residues 406–428 (GKKR…ADGS), 448–470 (VILS…AHKV), and 481–500 (ETDS…LGGN). 2 stretches are compositionally biased toward polar residues: residues 411–428 (SSAS…ADGS) and 448–462 (VILS…ASGQ).

It belongs to the G-protein coupled receptor 1 family. Opsin subfamily. In terms of tissue distribution, expressed in a subset of retinal horizontal cells as well as in retinal ganglion cells.

It localises to the cell membrane. Its function is as follows. Photoreceptor implicated in non-image-forming responses to light. The sequence is that of Melanopsin (opn4) from Rutilus rutilus (Roach).